The chain runs to 375 residues: Alcohol dehydrogenase 4, mitochondrial (375 aa).

The transit peptide at 1–27 (MFRLARAQTALANKASVSRSFLRLNSS) directs the protein to the mitochondrion. Cys71, His94, Cys125, Cys128, Cys131, Cys139, and Cys181 together coordinate Zn(2+). NAD(+) contacts are provided by residues 205–211 (GAAGGLG), Asp229, Lys234, 296–298 (VGL), and Arg368.

It belongs to the zinc-containing alcohol dehydrogenase family. As to quaternary structure, homotetramer. Zn(2+) serves as cofactor.

The protein localises to the mitochondrion matrix. The enzyme catalyses a primary alcohol + NAD(+) = an aldehyde + NADH + H(+). It catalyses the reaction a secondary alcohol + NAD(+) = a ketone + NADH + H(+). The protein is Alcohol dehydrogenase 4, mitochondrial (ADH4) of Kluyveromyces lactis (strain ATCC 8585 / CBS 2359 / DSM 70799 / NBRC 1267 / NRRL Y-1140 / WM37) (Yeast).